The following is a 776-amino-acid chain: 5-methyltetrahydropteroyltriglutamate--homocysteine methyltransferase (776 aa).

Residues 16 to 19 (RELK) and Lys-112 contribute to the 5-methyltetrahydropteroyltri-L-glutamate site. L-homocysteine-binding positions include 435–437 (IGS) and Glu-488. L-methionine contacts are provided by residues 435 to 437 (IGS) and Glu-488. Residues 519 to 520 (RC) and Trp-565 contribute to the 5-methyltetrahydropteroyltri-L-glutamate site. Asp-603 contributes to the L-homocysteine binding site. An L-methionine-binding site is contributed by Asp-603. Glu-609 provides a ligand contact to 5-methyltetrahydropteroyltri-L-glutamate. Zn(2+) is bound by residues His-645, Cys-647, and Glu-669. His-698 acts as the Proton donor in catalysis. Cys-730 is a binding site for Zn(2+).

This sequence belongs to the vitamin-B12 independent methionine synthase family. It depends on Zn(2+) as a cofactor.

It catalyses the reaction 5-methyltetrahydropteroyltri-L-glutamate + L-homocysteine = tetrahydropteroyltri-L-glutamate + L-methionine. The protein operates within amino-acid biosynthesis; L-methionine biosynthesis via de novo pathway; L-methionine from L-homocysteine (MetE route): step 1/1. In terms of biological role, catalyzes the transfer of a methyl group from 5-methyltetrahydrofolate to homocysteine resulting in methionine formation. The protein is 5-methyltetrahydropteroyltriglutamate--homocysteine methyltransferase of Ralstonia pickettii (strain 12J).